Reading from the N-terminus, the 253-residue chain is 5'/3'-nucleotidase SurE (253 aa).

Aspartate 8, aspartate 9, serine 39, and asparagine 92 together coordinate a divalent metal cation.

This sequence belongs to the SurE nucleotidase family. Requires a divalent metal cation as cofactor.

The protein resides in the cytoplasm. The enzyme catalyses a ribonucleoside 5'-phosphate + H2O = a ribonucleoside + phosphate. It catalyses the reaction a ribonucleoside 3'-phosphate + H2O = a ribonucleoside + phosphate. It carries out the reaction [phosphate](n) + H2O = [phosphate](n-1) + phosphate + H(+). Functionally, nucleotidase with a broad substrate specificity as it can dephosphorylate various ribo- and deoxyribonucleoside 5'-monophosphates and ribonucleoside 3'-monophosphates with highest affinity to 3'-AMP. Also hydrolyzes polyphosphate (exopolyphosphatase activity) with the preference for short-chain-length substrates (P20-25). Might be involved in the regulation of dNTP and NTP pools, and in the turnover of 3'-mononucleotides produced by numerous intracellular RNases (T1, T2, and F) during the degradation of various RNAs. The chain is 5'/3'-nucleotidase SurE from Salmonella typhimurium (strain LT2 / SGSC1412 / ATCC 700720).